Reading from the N-terminus, the 436-residue chain is Arginine biosynthesis bifunctional protein ArgJ, mitochondrial (436 aa).

The substrate site is built by T172, K198, T209, E298, N431, and S436. The active-site Nucleophile is the T209.

It belongs to the ArgJ family. In terms of assembly, heterodimer of an alpha and a beta chain. Post-translationally, the alpha and beta chains are autoproteolytically processed from a single precursor protein within the mitochondrion.

The protein resides in the mitochondrion matrix. It carries out the reaction N(2)-acetyl-L-ornithine + L-glutamate = N-acetyl-L-glutamate + L-ornithine. The catalysed reaction is L-glutamate + acetyl-CoA = N-acetyl-L-glutamate + CoA + H(+). Its pathway is amino-acid biosynthesis; L-arginine biosynthesis; L-ornithine and N-acetyl-L-glutamate from L-glutamate and N(2)-acetyl-L-ornithine (cyclic): step 1/1. It functions in the pathway amino-acid biosynthesis; L-arginine biosynthesis; N(2)-acetyl-L-ornithine from L-glutamate: step 1/4. In terms of biological role, catalyzes two activities which are involved in the cyclic version of arginine biosynthesis: the synthesis of acetylglutamate from glutamate and acetyl-CoA, and of ornithine by transacetylation between acetylornithine and glutamate. The sequence is that of Arginine biosynthesis bifunctional protein ArgJ, mitochondrial from Meyerozyma guilliermondii (strain ATCC 6260 / CBS 566 / DSM 6381 / JCM 1539 / NBRC 10279 / NRRL Y-324) (Yeast).